The sequence spans 400 residues: Carbamoyl phosphate synthase small chain (400 aa).

The segment at 1–199 is CPSase; sequence MSNETNANST…PYVIEAEGEA (199 aa). L-glutamine contacts are provided by serine 66, glycine 250, and glycine 252. In terms of domain architecture, Glutamine amidotransferase type-1 spans 200-395; that stretch reads RHTVVAYDLG…VALMDEDSEN (196 aa). Catalysis depends on cysteine 278, which acts as the Nucleophile. Positions 279, 282, 320, 322, and 323 each coordinate L-glutamine. Catalysis depends on residues histidine 368 and glutamate 370.

This sequence belongs to the CarA family. In terms of assembly, composed of two chains; the small (or glutamine) chain promotes the hydrolysis of glutamine to ammonia, which is used by the large (or ammonia) chain to synthesize carbamoyl phosphate. Tetramer of heterodimers (alpha,beta)4.

The enzyme catalyses hydrogencarbonate + L-glutamine + 2 ATP + H2O = carbamoyl phosphate + L-glutamate + 2 ADP + phosphate + 2 H(+). The catalysed reaction is L-glutamine + H2O = L-glutamate + NH4(+). It participates in amino-acid biosynthesis; L-arginine biosynthesis; carbamoyl phosphate from bicarbonate: step 1/1. Its pathway is pyrimidine metabolism; UMP biosynthesis via de novo pathway; (S)-dihydroorotate from bicarbonate: step 1/3. Functionally, small subunit of the glutamine-dependent carbamoyl phosphate synthetase (CPSase). CPSase catalyzes the formation of carbamoyl phosphate from the ammonia moiety of glutamine, carbonate, and phosphate donated by ATP, constituting the first step of 2 biosynthetic pathways, one leading to arginine and/or urea and the other to pyrimidine nucleotides. The small subunit (glutamine amidotransferase) binds and cleaves glutamine to supply the large subunit with the substrate ammonia. The protein is Carbamoyl phosphate synthase small chain of Corynebacterium efficiens (strain DSM 44549 / YS-314 / AJ 12310 / JCM 11189 / NBRC 100395).